The chain runs to 971 residues: Translation initiation factor IF-2 (971 aa).

The span at aspartate 48–lysine 63 shows a compositional bias: basic and acidic residues. Disordered stretches follow at residues aspartate 48 to isoleucine 86 and aspartate 100 to glutamine 381. Positions glycine 105–alanine 114 are enriched in low complexity. Residues glutamate 121 to alanine 181 are compositionally biased toward basic and acidic residues. A compositionally biased stretch (low complexity) spans alanine 182–alanine 202. The segment covering aspartate 210–arginine 261 has biased composition (basic and acidic residues). Positions proline 277–proline 286 are enriched in pro residues. The segment covering alanine 304 to alanine 326 has biased composition (low complexity). Gly residues predominate over residues serine 356–lysine 369. The 170-residue stretch at proline 471 to lysine 640 folds into the tr-type G domain. Positions glycine 480–threonine 487 are G1. Glycine 480 to threonine 487 provides a ligand contact to GTP. A G2 region spans residues glycine 505–histidine 509. Residues aspartate 526–glycine 529 are G3. Residues aspartate 526–histidine 530 and asparagine 580–aspartate 583 each bind GTP. The tract at residues asparagine 580 to aspartate 583 is G4. Residues serine 616–lysine 618 form a G5 region.

This sequence belongs to the TRAFAC class translation factor GTPase superfamily. Classic translation factor GTPase family. IF-2 subfamily.

The protein localises to the cytoplasm. In terms of biological role, one of the essential components for the initiation of protein synthesis. Protects formylmethionyl-tRNA from spontaneous hydrolysis and promotes its binding to the 30S ribosomal subunits. Also involved in the hydrolysis of GTP during the formation of the 70S ribosomal complex. This Burkholderia orbicola (strain AU 1054) protein is Translation initiation factor IF-2.